Reading from the N-terminus, the 477-residue chain is MKVTLPEFERAGVMVVGDVMLDRYWYGPSSRISPEAPVPVVKVNTIEERPGGAANVAMNIASLGANARLVGLTGIDDAARALSKSLADVNVKCDFVSVPTHPTITKLRVLSRNQQLIRLDFEEGFEGVDPQPLHERINQALSSIGALVLSDYAKGALASVQQMIQLARKAGVPVLIDPKGTDFERYRGATLLTPNLSEFEAVVGKCKTEEEIVERGMKLIADYELSALLVTRSEQGMSLLQPGKAPLHMPTQAQEVYDVTGAGDTVIGVLAATLAAGNSLEEACFFANAAAGVVVGKLGTSTVSPIELENAVRGRADTGFGVMTEEELKLAVVAARKRGEKVVMTNGVFDILHAGHVSYLANARKLGDRLIVAVNSDASTKRLKGDSRPVNPLEQRMIVLGALEAVDWVVSFEEDTPQRLIAGILPDLLVKGGDYKPEEIAGSKEVWANGGEVLVLNFEDGCSTTNIIKKIQQDKKG.

Residues 1–318 are ribokinase; sequence MKVTLPEFER…ENAVRGRADT (318 aa). Lysine 179 is modified (N6-acetyllysine). Residue 195–198 participates in ATP binding; the sequence is NLSE. Aspartate 264 is a catalytic residue. The cytidylyltransferase stretch occupies residues 344 to 477; it reads MTNGVFDILH…IKKIQQDKKG (134 aa).

This sequence in the N-terminal section; belongs to the carbohydrate kinase PfkB family. In the C-terminal section; belongs to the cytidylyltransferase family. In terms of assembly, homodimer.

The catalysed reaction is D-glycero-beta-D-manno-heptose 7-phosphate + ATP = D-glycero-beta-D-manno-heptose 1,7-bisphosphate + ADP + H(+). It carries out the reaction D-glycero-beta-D-manno-heptose 1-phosphate + ATP + H(+) = ADP-D-glycero-beta-D-manno-heptose + diphosphate. It functions in the pathway nucleotide-sugar biosynthesis; ADP-L-glycero-beta-D-manno-heptose biosynthesis; ADP-L-glycero-beta-D-manno-heptose from D-glycero-beta-D-manno-heptose 7-phosphate: step 1/4. The protein operates within nucleotide-sugar biosynthesis; ADP-L-glycero-beta-D-manno-heptose biosynthesis; ADP-L-glycero-beta-D-manno-heptose from D-glycero-beta-D-manno-heptose 7-phosphate: step 3/4. Its pathway is bacterial outer membrane biogenesis; LPS core biosynthesis. Functionally, catalyzes the phosphorylation of D-glycero-D-manno-heptose 7-phosphate at the C-1 position to selectively form D-glycero-beta-D-manno-heptose-1,7-bisphosphate. Catalyzes the ADP transfer from ATP to D-glycero-beta-D-manno-heptose 1-phosphate, yielding ADP-D-glycero-beta-D-manno-heptose. This chain is Bifunctional protein HldE, found in Escherichia coli O157:H7.